We begin with the raw amino-acid sequence, 291 residues long: Bifunctional protein FolD (291 aa).

Residues Gly-173–Ser-175 and Ser-198 contribute to the NADP(+) site.

This sequence belongs to the tetrahydrofolate dehydrogenase/cyclohydrolase family. As to quaternary structure, homodimer.

It carries out the reaction (6R)-5,10-methylene-5,6,7,8-tetrahydrofolate + NADP(+) = (6R)-5,10-methenyltetrahydrofolate + NADPH. It catalyses the reaction (6R)-5,10-methenyltetrahydrofolate + H2O = (6R)-10-formyltetrahydrofolate + H(+). Its pathway is one-carbon metabolism; tetrahydrofolate interconversion. Functionally, catalyzes the oxidation of 5,10-methylenetetrahydrofolate to 5,10-methenyltetrahydrofolate and then the hydrolysis of 5,10-methenyltetrahydrofolate to 10-formyltetrahydrofolate. The chain is Bifunctional protein FolD from Psychrobacter sp. (strain PRwf-1).